A 238-amino-acid polypeptide reads, in one-letter code: Ribonuclease PH (238 aa).

Phosphate contacts are provided by residues Arg86 and 124–126 (GTR).

It belongs to the RNase PH family. In terms of assembly, homohexameric ring arranged as a trimer of dimers.

It catalyses the reaction tRNA(n+1) + phosphate = tRNA(n) + a ribonucleoside 5'-diphosphate. In terms of biological role, phosphorolytic 3'-5' exoribonuclease that plays an important role in tRNA 3'-end maturation. Removes nucleotide residues following the 3'-CCA terminus of tRNAs; can also add nucleotides to the ends of RNA molecules by using nucleoside diphosphates as substrates, but this may not be physiologically important. Probably plays a role in initiation of 16S rRNA degradation (leading to ribosome degradation) during starvation. The protein is Ribonuclease PH of Alkalilimnicola ehrlichii (strain ATCC BAA-1101 / DSM 17681 / MLHE-1).